We begin with the raw amino-acid sequence, 278 residues long: Protein irg-2 (278 aa).

Residues 152–179 (NSIRGQPFKSLQPENRTPTQVTGHQQES) are disordered. Over residues 163–179 (QPENRTPTQVTGHQQES) the composition is skewed to polar residues.

Plays a role in innate immunity by conferring resistance to virulent strains of the Gram-negative bacterium P.aeruginosa via the zip-2 pathway and independent of the pmk-1 p38MAPK pathway. Induced as part of several immune responses to translational inhibition arising from endocytosis of ToxA during P.aeruginosa infection or exposure to exogenous cycloheximide. This Caenorhabditis elegans protein is Protein irg-2.